A 20-amino-acid chain; its full sequence is Methyl-coenzyme M reductase subunit gamma (20 aa).

The segment at 1–20 (AYERQFYPGATSVAENNIGH) is disordered.

The protein belongs to the methyl-coenzyme M reductase gamma subunit family. In terms of assembly, MCR from M.thermophila is a heterotrimer composed of an alpha, a beta, and a gamma subunit. Coenzyme F430 serves as cofactor.

The protein localises to the cytoplasm. It carries out the reaction coenzyme B + methyl-coenzyme M = methane + coenzyme M-coenzyme B heterodisulfide. It functions in the pathway one-carbon metabolism; methyl-coenzyme M reduction; methane from methyl-coenzyme M: step 1/1. In terms of biological role, component of the methyl-coenzyme M reductase (MCR) I that catalyzes the reductive cleavage of methyl-coenzyme M (CoM-S-CH3 or 2-(methylthio)ethanesulfonate) using coenzyme B (CoB or 7-mercaptoheptanoylthreonine phosphate) as reductant which results in the production of methane and the mixed heterodisulfide of CoB and CoM (CoM-S-S-CoB). This is the final step in methanogenesis. This Methanosarcina thermophila protein is Methyl-coenzyme M reductase subunit gamma.